We begin with the raw amino-acid sequence, 219 residues long: Probable nicotinate-nucleotide adenylyltransferase (219 aa).

Belongs to the NadD family.

It catalyses the reaction nicotinate beta-D-ribonucleotide + ATP + H(+) = deamido-NAD(+) + diphosphate. The protein operates within cofactor biosynthesis; NAD(+) biosynthesis; deamido-NAD(+) from nicotinate D-ribonucleotide: step 1/1. In terms of biological role, catalyzes the reversible adenylation of nicotinate mononucleotide (NaMN) to nicotinic acid adenine dinucleotide (NaAD). The polypeptide is Probable nicotinate-nucleotide adenylyltransferase (Pseudomonas putida (strain W619)).